The sequence spans 336 residues: Large ribosomal subunit protein mL39 (336 aa).

One can recognise a TGS domain in the interval 60–126 (EKIEVKHVGK…TKSCEIKFLT (67 aa)). K123 carries the post-translational modification N6-acetyllysine.

It belongs to the mitochondrion-specific ribosomal protein mL39 family. As to quaternary structure, component of the mitochondrial ribosome large subunit (39S) which comprises a 16S rRNA and about 50 distinct proteins.

It is found in the mitochondrion. The polypeptide is Large ribosomal subunit protein mL39 (Mrpl39) (Mus musculus (Mouse)).